The sequence spans 256 residues: Imidazole glycerol phosphate synthase subunit HisF (256 aa).

Residues D12 and D131 contribute to the active site.

The protein belongs to the HisA/HisF family. In terms of assembly, heterodimer of HisH and HisF.

The protein localises to the cytoplasm. It carries out the reaction 5-[(5-phospho-1-deoxy-D-ribulos-1-ylimino)methylamino]-1-(5-phospho-beta-D-ribosyl)imidazole-4-carboxamide + L-glutamine = D-erythro-1-(imidazol-4-yl)glycerol 3-phosphate + 5-amino-1-(5-phospho-beta-D-ribosyl)imidazole-4-carboxamide + L-glutamate + H(+). It participates in amino-acid biosynthesis; L-histidine biosynthesis; L-histidine from 5-phospho-alpha-D-ribose 1-diphosphate: step 5/9. In terms of biological role, IGPS catalyzes the conversion of PRFAR and glutamine to IGP, AICAR and glutamate. The HisF subunit catalyzes the cyclization activity that produces IGP and AICAR from PRFAR using the ammonia provided by the HisH subunit. The protein is Imidazole glycerol phosphate synthase subunit HisF of Pseudomonas paraeruginosa (strain DSM 24068 / PA7) (Pseudomonas aeruginosa (strain PA7)).